Consider the following 728-residue polypeptide: Double-strand break repair protein mre-11 (728 aa).

A compositionally biased stretch (acidic residues) spans 1–12 (MCGSDDSFDDFV). Residues 1-45 (MCGSDDSFDDFVPDSQEPASSRTRNQDHLDDDEVPCSQRPDAAND) are disordered. Mn(2+) contacts are provided by aspartate 73, histidine 75, aspartate 113, and asparagine 181. The Proton donor role is filled by histidine 182. Positions 269, 301, and 303 each coordinate Mn(2+). Residues 601 to 728 (KNPVADVEME…PSKKRDLSFF (128 aa)) form a disordered region. Positions 607-616 (VEMEEDEDDP) are enriched in acidic residues. Positions 622-632 (PQSTSRTNYAS) are enriched in polar residues. Positions 634–645 (SEDEVANSDEEM) are enriched in acidic residues.

The protein belongs to the MRE11/RAD32 family. In terms of assembly, component of the MRN complex composed of two heterodimers rad-50 and mre-11 associated with a single nbs-1. Mn(2+) is required as a cofactor.

The protein localises to the nucleus. It localises to the chromosome. Functionally, core component of the MRN complex, which plays a central role in double-strand break (DSB) repair, DNA recombination, maintenance of telomere integrity and meiosis. The MRN complex is involved in the repair of DNA double-strand breaks (DSBs) via homologous recombination (HR), an error-free mechanism which primarily occurs during S and G2 phases. The complex (1) mediates the end resection of damaged DNA, which generates proper single-stranded DNA, a key initial steps in HR, and is (2) required for the recruitment of other repair factors and efficient activation of ATM and ATR upon DNA damage. Within the MRN complex, mre-11 possesses both single-strand endonuclease activity and double-strand-specific 3'-5' exonuclease activity. Mre-11 first endonucleolytically cleaves the 5' strand at DNA DSB ends to prevent non-homologous end joining (NHEJ) and licence HR. It then generates a single-stranded DNA gap via 3' to 5' exonucleolytic degradation, which is required for single-strand invasion and recombination. Required for meiotic crossing over and chiasma formation. Pachytene morphology and homolog pairing are normal. Vital in long term for maintenance of reproductive capacity of subsequent generations. In Caenorhabditis elegans, this protein is Double-strand break repair protein mre-11.